We begin with the raw amino-acid sequence, 318 residues long: Ribokinase (318 aa).

Substrate contacts are provided by residues 11 to 13, 41 to 45, and glutamate 146; these read NTD and GKGAN. ATP contacts are provided by residues asparagine 190 and 229–234; that span reads TLGSQG. K(+)-binding residues include aspartate 256 and threonine 258. Residue 261 to 262 participates in ATP binding; sequence GD. Substrate is bound at residue aspartate 262. Residue aspartate 262 is the Proton acceptor of the active site. Threonine 292, arginine 295, glycine 297, and serine 301 together coordinate K(+).

It belongs to the carbohydrate kinase PfkB family. Ribokinase subfamily. Homodimer. Mg(2+) serves as cofactor.

The protein localises to the cytoplasm. It localises to the nucleus. It carries out the reaction D-ribose + ATP = D-ribose 5-phosphate + ADP + H(+). Its pathway is carbohydrate metabolism; D-ribose degradation; D-ribose 5-phosphate from beta-D-ribopyranose: step 2/2. Activated by a monovalent cation that binds near, but not in, the active site. The most likely occupant of the site in vivo is potassium. Ion binding induces a conformational change that may alter substrate affinity. Its function is as follows. Catalyzes the phosphorylation of ribose at O-5 in a reaction requiring ATP and magnesium. The resulting D-ribose-5-phosphate can then be used either for sythesis of nucleotides, histidine, and tryptophan, or as a component of the pentose phosphate pathway. This Schizosaccharomyces pombe (strain 972 / ATCC 24843) (Fission yeast) protein is Ribokinase.